The chain runs to 288 residues: Thymidylate synthase (288 aa).

Arginine 21 provides a ligand contact to dUMP. Asparagine 51 lines the (6R)-5,10-methylene-5,6,7,8-tetrahydrofolate pocket. 150-151 contacts dUMP; it reads RR. Cysteine 170 serves as the catalytic Nucleophile. DUMP contacts are provided by residues 190-193, asparagine 201, and 231-233; these read RSGD and HIY. A (6R)-5,10-methylene-5,6,7,8-tetrahydrofolate-binding site is contributed by aspartate 193. A (6R)-5,10-methylene-5,6,7,8-tetrahydrofolate-binding site is contributed by alanine 287.

This sequence belongs to the thymidylate synthase family. Bacterial-type ThyA subfamily. As to quaternary structure, homodimer.

The protein localises to the cytoplasm. It catalyses the reaction dUMP + (6R)-5,10-methylene-5,6,7,8-tetrahydrofolate = 7,8-dihydrofolate + dTMP. Its pathway is pyrimidine metabolism; dTTP biosynthesis. In terms of biological role, catalyzes the reductive methylation of 2'-deoxyuridine-5'-monophosphate (dUMP) to 2'-deoxythymidine-5'-monophosphate (dTMP) while utilizing 5,10-methylenetetrahydrofolate (mTHF) as the methyl donor and reductant in the reaction, yielding dihydrofolate (DHF) as a by-product. This enzymatic reaction provides an intracellular de novo source of dTMP, an essential precursor for DNA biosynthesis. This Phytoplasma mali (strain AT) protein is Thymidylate synthase.